Consider the following 263-residue polypeptide: Tryptophan synthase alpha chain (263 aa).

Catalysis depends on proton acceptor residues Glu-49 and Asp-60.

Belongs to the TrpA family. Tetramer of two alpha and two beta chains.

The catalysed reaction is (1S,2R)-1-C-(indol-3-yl)glycerol 3-phosphate + L-serine = D-glyceraldehyde 3-phosphate + L-tryptophan + H2O. It participates in amino-acid biosynthesis; L-tryptophan biosynthesis; L-tryptophan from chorismate: step 5/5. Its function is as follows. The alpha subunit is responsible for the aldol cleavage of indoleglycerol phosphate to indole and glyceraldehyde 3-phosphate. The chain is Tryptophan synthase alpha chain from Jannaschia sp. (strain CCS1).